The primary structure comprises 137 residues: Proline-rich protein 13 (137 aa).

2 disordered regions span residues 26–54 (PPPLNPAFPPGPCPPGIPQGNPAFPPCRP) and 94–137 (VGPG…SDSD). A compositionally biased stretch (basic residues) spans 103–124 (KTRKKMKKAHKKSHKHHKHGKH). Positions 125-137 (SSSSSSSSSSDSD) are enriched in low complexity.

Its subcellular location is the nucleus. In terms of biological role, negatively regulates TSP1 expression at the level of transcription. This down-regulation was shown to reduce taxane-induced apoptosis. This is Proline-rich protein 13 (Prr13) from Mus musculus (Mouse).